The following is a 1036-amino-acid chain: Pre-mRNA-processing factor 39-2 (1036 aa).

The segment at 1–24 (MVTTEVRTAVSDKEPLQRSPELDS) is disordered. HAT repeat units lie at residues 62-94 (DDIE…HKIK), 96-128 (CTLE…FAVA), 131-166 (EDPH…YLLG), 168-201 (QQWS…IAAS), 278-310 (CFET…FGET), and 312-344 (GDFD…FVES). Disordered stretches follow at residues 595-618 (GISS…YGTQ), 714-767 (PSGS…PVGT), and 995-1036 (KGDE…ISSI). A compositionally biased stretch (low complexity) spans 714-726 (PSGSQSPQSYQSQ). A compositionally biased stretch (basic and acidic residues) spans 740–755 (RDLNQMHRDSKPRSQE). Over residues 1002 to 1036 (SMPQGSTTNSDIQKSQESGAVNEANLSSDTSISSI) the composition is skewed to polar residues.

Belongs to the PRP39 family.

It is found in the nucleus. Its function is as follows. Involved in pre-mRNA splicing. This is Pre-mRNA-processing factor 39-2 from Arabidopsis thaliana (Mouse-ear cress).